The chain runs to 104 residues: uncharacterized protein (104 aa).

The N-terminal stretch at 1–23 is a signal peptide; that stretch reads MDIHDYVELIALAFWVISVVSVG.

This is an uncharacterized protein from Lactobacillus helveticus (Lactobacillus suntoryeus).